The following is a 420-amino-acid chain: Acyl-coenzyme A amino acid N-acyltransferase 2 (420 aa).

Catalysis depends on charge relay system residues serine 235, aspartate 329, and histidine 363. The Microbody targeting signal motif lies at 418-420 (SKL).

It belongs to the C/M/P thioester hydrolase family.

Its subcellular location is the peroxisome. Its function is as follows. Acyltransferase which efficiently conjugates very long-chain and long-chain fatty acids to taurine. Shows no conjugation activity in the presence of glycine. This chain is Acyl-coenzyme A amino acid N-acyltransferase 2, found in Mus musculus (Mouse).